The primary structure comprises 91 residues: Small ribosomal subunit protein uS19 (91 aa).

It belongs to the universal ribosomal protein uS19 family.

Functionally, protein S19 forms a complex with S13 that binds strongly to the 16S ribosomal RNA. The protein is Small ribosomal subunit protein uS19 of Bordetella avium (strain 197N).